Consider the following 452-residue polypeptide: UDP-glycosyltransferase 79B11 (452 aa).

UDP-alpha-D-glucose-binding positions include S260, 319–325 (VQQPSWQ), 340–348 (HCGFGSMWE), and 362–365 (LNDQ).

The protein belongs to the UDP-glycosyltransferase family.

This Arabidopsis thaliana (Mouse-ear cress) protein is UDP-glycosyltransferase 79B11 (UGT79B11).